A 104-amino-acid polypeptide reads, in one-letter code: Phosphoribosyl-ATP pyrophosphatase (104 aa).

The protein belongs to the PRA-PH family.

It localises to the cytoplasm. It catalyses the reaction 1-(5-phospho-beta-D-ribosyl)-ATP + H2O = 1-(5-phospho-beta-D-ribosyl)-5'-AMP + diphosphate + H(+). The protein operates within amino-acid biosynthesis; L-histidine biosynthesis; L-histidine from 5-phospho-alpha-D-ribose 1-diphosphate: step 2/9. The sequence is that of Phosphoribosyl-ATP pyrophosphatase from Streptococcus gordonii (strain Challis / ATCC 35105 / BCRC 15272 / CH1 / DL1 / V288).